Here is a 62-residue protein sequence, read N- to C-terminus: Small ribosomal subunit protein eS27 (62 aa).

Positions 17, 20, 36, and 39 each coordinate Zn(2+). The C4-type zinc finger occupies 17–39 (CPDCDNEQTVFSKASTTVKCVVC).

The protein belongs to the eukaryotic ribosomal protein eS27 family. As to quaternary structure, part of the 30S ribosomal subunit. It depends on Zn(2+) as a cofactor.

This is Small ribosomal subunit protein eS27 from Methanoregula boonei (strain DSM 21154 / JCM 14090 / 6A8).